Reading from the N-terminus, the 224-residue chain is PKHD-type hydroxylase Shewmr4_3244 (224 aa).

The Fe2OG dioxygenase domain maps to 78–176; it reads QFYPPLFNRY…RTAAFMWLQS (99 aa). Fe cation is bound by residues H96, D98, and H157. Residue R167 participates in 2-oxoglutarate binding.

The cofactor is Fe(2+). It depends on L-ascorbate as a cofactor.

This Shewanella sp. (strain MR-4) protein is PKHD-type hydroxylase Shewmr4_3244.